We begin with the raw amino-acid sequence, 188 residues long: MSRLRIFADTNPATPEFDSRDGDAIASELKKIGVTFERWHASAPVEPGATPEQVMDAYRADIDRISAERGFKTVDVVSIAPDNPKREEMRAKFLDEHFHKEDEVRFFVAGSGLFTLHVDAKVYEIECVKDDLIAVPDSTLHWFDMGPEPHFVAIRFFTEPDGWVGHFTGTEIAKQFPRYAPEKPHKAS.

The Fe(2+) site is built by His97, His99, Glu103, and His141. Positions 97, 99, 103, and 141 each coordinate Ni(2+).

Belongs to the acireductone dioxygenase (ARD) family. As to quaternary structure, monomer. Fe(2+) serves as cofactor. Requires Ni(2+) as cofactor.

It catalyses the reaction 1,2-dihydroxy-5-(methylsulfanyl)pent-1-en-3-one + O2 = 3-(methylsulfanyl)propanoate + CO + formate + 2 H(+). The catalysed reaction is 1,2-dihydroxy-5-(methylsulfanyl)pent-1-en-3-one + O2 = 4-methylsulfanyl-2-oxobutanoate + formate + 2 H(+). Its pathway is amino-acid biosynthesis; L-methionine biosynthesis via salvage pathway; L-methionine from S-methyl-5-thio-alpha-D-ribose 1-phosphate: step 5/6. Catalyzes 2 different reactions between oxygen and the acireductone 1,2-dihydroxy-3-keto-5-methylthiopentene (DHK-MTPene) depending upon the metal bound in the active site. Fe-containing acireductone dioxygenase (Fe-ARD) produces formate and 2-keto-4-methylthiobutyrate (KMTB), the alpha-ketoacid precursor of methionine in the methionine recycle pathway. Ni-containing acireductone dioxygenase (Ni-ARD) produces methylthiopropionate, carbon monoxide and formate, and does not lie on the methionine recycle pathway. In Xanthomonas oryzae pv. oryzae (strain MAFF 311018), this protein is Acireductone dioxygenase.